A 177-amino-acid chain; its full sequence is Adenine phosphoribosyltransferase (177 aa).

It belongs to the purine/pyrimidine phosphoribosyltransferase family. In terms of assembly, homodimer.

The protein resides in the cytoplasm. The enzyme catalyses AMP + diphosphate = 5-phospho-alpha-D-ribose 1-diphosphate + adenine. The protein operates within purine metabolism; AMP biosynthesis via salvage pathway; AMP from adenine: step 1/1. Catalyzes a salvage reaction resulting in the formation of AMP, that is energically less costly than de novo synthesis. This is Adenine phosphoribosyltransferase from Anaeromyxobacter sp. (strain Fw109-5).